Reading from the N-terminus, the 235-residue chain is Large ribosomal subunit protein uL1 (235 aa).

Belongs to the universal ribosomal protein uL1 family. As to quaternary structure, part of the 50S ribosomal subunit.

Functionally, binds directly to 23S rRNA. The L1 stalk is quite mobile in the ribosome, and is involved in E site tRNA release. Protein L1 is also a translational repressor protein, it controls the translation of the L11 operon by binding to its mRNA. The sequence is that of Large ribosomal subunit protein uL1 from Renibacterium salmoninarum (strain ATCC 33209 / DSM 20767 / JCM 11484 / NBRC 15589 / NCIMB 2235).